A 214-amino-acid polypeptide reads, in one-letter code: Adenylate kinase (214 aa).

10 to 15 serves as a coordination point for ATP; sequence GAGKGT. Positions 30-59 are NMP; it reads STGDMFRAAVKNETPLGLEAKSYMDKGHLV. AMP contacts are provided by residues Thr-31, Arg-36, 57–59, 85–88, and Gln-92; these read HLV and GFPR. Positions 126–163 are LID; it reads GRWICPVCGASYHTMFNPPKEAGVCDKDGGKLYQREDD. Position 127 (Arg-127) interacts with ATP. Positions 130 and 133 each coordinate Zn(2+). Residue 136 to 137 participates in ATP binding; the sequence is SY. 2 residues coordinate Zn(2+): Cys-150 and Asp-153. Residues Arg-160 and Arg-171 each contribute to the AMP site. Residue Gln-199 coordinates ATP.

Belongs to the adenylate kinase family. Monomer.

It is found in the cytoplasm. The enzyme catalyses AMP + ATP = 2 ADP. It participates in purine metabolism; AMP biosynthesis via salvage pathway; AMP from ADP: step 1/1. In terms of biological role, catalyzes the reversible transfer of the terminal phosphate group between ATP and AMP. Plays an important role in cellular energy homeostasis and in adenine nucleotide metabolism. This Brevibacillus brevis (strain 47 / JCM 6285 / NBRC 100599) protein is Adenylate kinase.